A 694-amino-acid polypeptide reads, in one-letter code: Elongation factor G (694 aa).

Positions 8-287 (EDYRNFGIMA…AVVEFLPAPT (280 aa)) constitute a tr-type G domain. GTP-binding positions include 17-24 (AHIDAGKT), 86-90 (DTPGH), and 140-143 (NKMD).

Belongs to the TRAFAC class translation factor GTPase superfamily. Classic translation factor GTPase family. EF-G/EF-2 subfamily.

It is found in the cytoplasm. Catalyzes the GTP-dependent ribosomal translocation step during translation elongation. During this step, the ribosome changes from the pre-translocational (PRE) to the post-translocational (POST) state as the newly formed A-site-bound peptidyl-tRNA and P-site-bound deacylated tRNA move to the P and E sites, respectively. Catalyzes the coordinated movement of the two tRNA molecules, the mRNA and conformational changes in the ribosome. This is Elongation factor G from Brucella abortus (strain S19).